Reading from the N-terminus, the 84-residue chain is RNA-binding protein Hfq (84 aa).

Residues 10 to 70 form the Sm domain; the sequence is DNVLNQVRKN…VSTIIPGKTL (61 aa).

Belongs to the Hfq family. In terms of assembly, homohexamer.

RNA chaperone that binds small regulatory RNA (sRNAs) and mRNAs to facilitate mRNA translational regulation in response to envelope stress, environmental stress and changes in metabolite concentrations. Also binds with high specificity to tRNAs. This Natranaerobius thermophilus (strain ATCC BAA-1301 / DSM 18059 / JW/NM-WN-LF) protein is RNA-binding protein Hfq.